A 276-amino-acid chain; its full sequence is 3-methyl-2-oxobutanoate hydroxymethyltransferase (276 aa).

Positions 46 and 85 each coordinate Mg(2+). 3-methyl-2-oxobutanoate is bound by residues 46-47, Asp85, and Lys115; that span reads DS. Glu117 serves as a coordination point for Mg(2+). Glu184 functions as the Proton acceptor in the catalytic mechanism.

It belongs to the PanB family. As to quaternary structure, homodecamer; pentamer of dimers. Requires Mg(2+) as cofactor.

It is found in the cytoplasm. The enzyme catalyses 3-methyl-2-oxobutanoate + (6R)-5,10-methylene-5,6,7,8-tetrahydrofolate + H2O = 2-dehydropantoate + (6S)-5,6,7,8-tetrahydrofolate. It functions in the pathway cofactor biosynthesis; (R)-pantothenate biosynthesis; (R)-pantoate from 3-methyl-2-oxobutanoate: step 1/2. Its function is as follows. Catalyzes the reversible reaction in which hydroxymethyl group from 5,10-methylenetetrahydrofolate is transferred onto alpha-ketoisovalerate to form ketopantoate. This is 3-methyl-2-oxobutanoate hydroxymethyltransferase from Heliobacterium modesticaldum (strain ATCC 51547 / Ice1).